We begin with the raw amino-acid sequence, 381 residues long: Pulmonary surfactant-associated protein B (381 aa).

Positions 1–24 (MAESHLLQWLLLLLPTLCGPGTAA) are cleaved as a signal peptide. Residues 25–65 (WTTSSLACAQGPEFWCQSLEQALQCRALGHCLQEVWGHVGA) form the Saposin A-type domain. A propeptide spanning residues 25 to 200 (WTTSSLACAQ…PHTQDLSEQQ (176 aa)) is cleaved from the precursor. 3 Saposin B-type domains span residues 65–147 (ADDL…KSRQ), 204–281 (PLPY…SMDD), and 295–370 (RDSE…GTMS). Cystine bridges form between cysteine 69–cysteine 143, cysteine 72–cysteine 137, cysteine 100–cysteine 112, cysteine 208–cysteine 277, cysteine 211–cysteine 271, cysteine 235–cysteine 246, cysteine 299–cysteine 366, cysteine 302–cysteine 360, and cysteine 325–cysteine 335. Asparagine 129 carries an N-linked (GlcNAc...) asparagine glycan. Residues 280–381 (DDSAGPRSPT…PLQCIHSPDL (102 aa)) constitute a propeptide that is removed on maturation. Asparagine 311 carries an N-linked (GlcNAc...) asparagine glycan.

As to quaternary structure, homodimer; disulfide-linked.

It is found in the secreted. Its subcellular location is the extracellular space. It localises to the surface film. Pulmonary surfactant-associated proteins promote alveolar stability by lowering the surface tension at the air-liquid interface in the peripheral air spaces. SP-B increases the collapse pressure of palmitic acid to nearly 70 millinewtons per meter. In Homo sapiens (Human), this protein is Pulmonary surfactant-associated protein B (SFTPB).